A 684-amino-acid polypeptide reads, in one-letter code: TBC1 domain family member 23 (684 aa).

In terms of domain architecture, Rab-GAP TBC spans 44 to 225 (PLPADLRAKV…AIWDGYLQQA (182 aa)). Ser-300 is modified (phosphoserine). Positions 334–446 (EGVRFFVVDC…LQQHLADINV (113 aa)) constitute a Rhodanese domain. The segment covering 459–479 (STSGSRSSINSVDGESPNGSS) has biased composition (polar residues). The tract at residues 459-482 (STSGSRSSINSVDGESPNGSSDRG) is disordered. Residues Ser-469, Ser-474, and Ser-507 each carry the phosphoserine modification. Thr-514 carries the phosphothreonine modification. Residues 514-558 (TPVDRHVSSSDRVGKPYRGVKPVFSIGDEEEYDTDEIDSSSMSDD) form a may mediate the interaction with C17orf75, FAM91A1 and WDR11 region. The may mediate the interaction with WASHC1 stretch occupies residues 514 to 684 (TPVDRHVSSS…IMKVLDALES (171 aa)). A Phosphoserine modification is found at Ser-556. The tract at residues 559-684 (DRKEVVNIQT…IMKVLDALES (126 aa)) is may mediate the interaction with FKBP15 and WASHC2; required for endosome to Golgi trafficking.

In terms of assembly, directly interacts with GOLGA1 and GOLGA4. Interacts with FAM91A1, C17ORF75 and WDR11; the interaction recruits TBC1D23 to AP-1-derived vesicles. Directly interacts with WASHC1 and WASHC2A/FAM21A. Interacts with FKBP15.

The protein resides in the golgi apparatus. It localises to the trans-Golgi network. It is found in the cytoplasmic vesicle. In terms of biological role, putative Rab GTPase-activating protein which plays a role in vesicular trafficking. Involved in endosome-to-Golgi trafficking. Acts as a bridging protein by binding simultaneously to golgins, including GOLGA1 and GOLGA4, located at the trans-Golgi, and to the WASH complex, located on endosome-derived vesicles. Together with WDR11 complex facilitates the golgin-mediated capture of vesicles generated using AP-1. Plays a role in brain development, including in cortical neuron positioning. May also be important for neurite outgrowth, possibly through its involvement in membrane trafficking and cargo delivery, 2 processes that are essential for axonal and dendritic growth. May act as a general inhibitor of innate immunity signaling, strongly inhibiting multiple TLR and dectin/CLEC7A-signaling pathways. Does not alter initial activation events, but instead affects maintenance of inflammatory gene expression several hours after bacterial lipopolysaccharide (LPS) challenge. This chain is TBC1 domain family member 23 (TBC1D23), found in Pongo abelii (Sumatran orangutan).